The sequence spans 310 residues: Quinolinate synthase 2 (310 aa).

Iminosuccinate is bound by residues H30 and S47. C92 contributes to the [4Fe-4S] cluster binding site. Iminosuccinate contacts are provided by residues 118 to 120 (YVN) and S135. C177 provides a ligand contact to [4Fe-4S] cluster. Residues 203-205 (HPE) and T220 each bind iminosuccinate. C265 contributes to the [4Fe-4S] cluster binding site.

This sequence belongs to the quinolinate synthase family. Type 2 subfamily. It depends on [4Fe-4S] cluster as a cofactor.

Its subcellular location is the cytoplasm. It carries out the reaction iminosuccinate + dihydroxyacetone phosphate = quinolinate + phosphate + 2 H2O + H(+). It functions in the pathway cofactor biosynthesis; NAD(+) biosynthesis; quinolinate from iminoaspartate: step 1/1. Functionally, catalyzes the condensation of iminoaspartate with dihydroxyacetone phosphate to form quinolinate. The chain is Quinolinate synthase 2 from Methanosarcina acetivorans (strain ATCC 35395 / DSM 2834 / JCM 12185 / C2A).